The chain runs to 213 residues: Orotate phosphoribosyltransferase (213 aa).

Lys-26 contributes to the 5-phospho-alpha-D-ribose 1-diphosphate binding site. 34-35 (FF) contacts orotate. 5-phospho-alpha-D-ribose 1-diphosphate-binding positions include 72 to 73 (YK), Arg-99, Lys-100, Lys-103, His-105, and 124 to 132 (DDVITAGTA). Residues Thr-128 and Arg-156 each contribute to the orotate site.

Belongs to the purine/pyrimidine phosphoribosyltransferase family. PyrE subfamily. In terms of assembly, homodimer. It depends on Mg(2+) as a cofactor.

The catalysed reaction is orotidine 5'-phosphate + diphosphate = orotate + 5-phospho-alpha-D-ribose 1-diphosphate. The protein operates within pyrimidine metabolism; UMP biosynthesis via de novo pathway; UMP from orotate: step 1/2. In terms of biological role, catalyzes the transfer of a ribosyl phosphate group from 5-phosphoribose 1-diphosphate to orotate, leading to the formation of orotidine monophosphate (OMP). The sequence is that of Orotate phosphoribosyltransferase from Pectobacterium carotovorum subsp. carotovorum (strain PC1).